The sequence spans 1052 residues: MSQQQNPPYGRRLILDIIKERALNEPNREWVSVPRSSDPKDGWKILTYLDAYNGINRVAHKLTQVCGAAAPGSFPTVAYIGPNDVRYLVFALGAVKAGYKALFISTRNSAEAQVNLFELTNCNVLVFDQSYKATVQPWLHEREMTAILALPADEWFPADQEDFPYNKTFEEAEWDPLMVLHTSGSTGFPKPIVARQGMLAVADQFHNLPPREDGKLMWIVEMSKRAKRLMHPMPLFHAAGMYISMLMIHYWDTPGALGIGERPLSSDLVLDYIEYADVEGMILPPAILEELSRDEKAIQSLQKLNFVSFGGGNLAPEAGDRLVENNVTLCNLISATEFTPFPFYWQYDQKLWRYFNFDTDLFGIDWRLHDGESTYEQVIVRKDKHPGLQGFFYTFPDSSEYSTKDLYKRHPTHEDFWIYQGRADNIIVFSNGEKLNPITIEETLQGHPKVMGAVVVGTNRFQPALIIEPVEHPETEEGRKALLDEIWPTVVRVNKETVAHGQIGRQYMALSTPGKPFLRAGKGTVLRPGTINMYKAEIDKIYEDAEKGVATDEVPKLDLSSSDALIVSIEKLFETSLNAPKLEADTDFFTAGVDSMQVITASRLIRAGLAAAGVNIEASALATRVIYGNPTPKRLADYLLSIVNKDSNQGTLDNEHHVMEALVEKYTRDLPTPKQNKPAPADEGQVVVITGTTGGIGSYLIDICSSSSRVSKIICLNRSEDGKARQTASSSGRGLSTDFSKCEFYHADMSRADLGLGPEVYSRLLSEVDRVIHNQWPVNFNIAVESFEPHIRGCRNLVDFSYKADKNVPIVFVSSIGTVDRWHDEDRIVPEASLDDLSLAAGGYGQSKLVSSLIFDKAAEVSGVPTEVVRVGQVAGPSSEKGYWNKQEWLPSIVASSAYLGVLPDSLGQMTTIDWTPIEAIAKLLLEVSGVIDNVPLDKINGYFHGVNPERTSWSALAPAVQEYYGDRIQKIVPLDEWLEALEKSQEKAEDVTRNPGIKLIDTYRTWSEGYKKGTKFVPLDMTRTKEYSKTMREMHAVTPELMKNWCRQWNF.

An adenylation (A) domain region spans residues arginine 21 to tyrosine 344. Residues serine 334–alanine 335, threonine 339, and tyrosine 419–arginine 422 each bind AMP. The region spanning serine 560–valine 643 is the Carrier domain. Serine 595 carries the O-(pantetheine 4'-phosphoryl)serine modification. Residues glycine 684–leucine 979 are carboxylic acid reductase (R) domain. Residues threonine 693–isoleucine 696, arginine 718, asparagine 774–tryptophan 776, serine 814, tyrosine 844, and lysine 848 contribute to the NADP(+) site.

The protein belongs to the adenylate-forming reductase family. Mg(2+) is required as a cofactor.

The catalysed reaction is an aromatic aldehyde + AMP + diphosphate + NADP(+) = an aromatic carboxylate + ATP + NADPH + H(+). It catalyses the reaction a carboxylate + ATP + NADPH + H(+) = an aldehyde + AMP + diphosphate + NADP(+). The enzyme catalyses benzoate + ATP + NADPH + H(+) = benzaldehyde + AMP + diphosphate + NADP(+). It carries out the reaction (E)-cinnamate + ATP + NADPH + H(+) = (E)-cinnamaldehyde + AMP + diphosphate + NADP(+). The catalysed reaction is piperonylate + ATP + NADPH + H(+) = piperonal + AMP + diphosphate + NADP(+). It catalyses the reaction salicylate + ATP + NADPH + H(+) = salicylaldehyde + AMP + diphosphate + NADP(+). The enzyme catalyses 3-hydroxybenzoate + ATP + NADPH + H(+) = 3-hydroxybenzaldehyde + AMP + diphosphate + NADP(+). It carries out the reaction 2-methoxybenzoate + ATP + NADPH + H(+) = 2-methoxybenzaldehyde + AMP + diphosphate + NADP(+). The catalysed reaction is 3-methoxybenzoate + ATP + NADPH + H(+) = 3-methoxybenzaldehyde + AMP + diphosphate + NADP(+). It catalyses the reaction 4-hydroxybenzoate + ATP + NADPH + H(+) = 4-hydroxybenzaldehyde + AMP + diphosphate + NADP(+). The enzyme catalyses 4-methoxybenzoate + ATP + NADPH + H(+) = 4-methoxybenzaldehyde + AMP + diphosphate + NADP(+). It carries out the reaction 3-phenylpropanoate + ATP + NADPH + H(+) = 3-phenylpropanal + AMP + diphosphate + NADP(+). The catalysed reaction is picolinate + ATP + NADPH + H(+) = picolinal + AMP + diphosphate + NADP(+). It catalyses the reaction propanoate + ATP + NADPH + H(+) = propanal + AMP + diphosphate + NADP(+). The enzyme catalyses butanoate + ATP + NADPH + H(+) = butanal + AMP + diphosphate + NADP(+). It carries out the reaction pentanoate + ATP + NADPH + H(+) = pentanal + AMP + diphosphate + NADP(+). The catalysed reaction is hexanoate + ATP + NADPH + H(+) = hexanal + AMP + diphosphate + NADP(+). It catalyses the reaction heptanoate + ATP + NADPH + H(+) = heptanal + AMP + diphosphate + NADP(+). The enzyme catalyses octanoate + ATP + NADPH + H(+) = octanal + AMP + diphosphate + NADP(+). It carries out the reaction nonanoate + ATP + NADPH + H(+) = nonanal + AMP + diphosphate + NADP(+). Its function is as follows. Carboxylic acid reductase that shows a broad range of substrate specificity towards aromatic acids, especially to phenyl carboxylic and phenyl acrylic acids, to convert them into their respective aldehydes. Also able to use aliphatic acids as substrates. This is Carboxylic acid reductase from Neurospora crassa (strain ATCC 24698 / 74-OR23-1A / CBS 708.71 / DSM 1257 / FGSC 987).